The following is a 259-amino-acid chain: 5'-nucleotidase SurE (259 aa).

Residues Asp8, Asp9, Ser40, and Asn92 each coordinate a divalent metal cation.

This sequence belongs to the SurE nucleotidase family. The cofactor is a divalent metal cation.

The protein resides in the cytoplasm. The enzyme catalyses a ribonucleoside 5'-phosphate + H2O = a ribonucleoside + phosphate. Nucleotidase that shows phosphatase activity on nucleoside 5'-monophosphates. This chain is 5'-nucleotidase SurE, found in Xanthomonas axonopodis pv. citri (strain 306).